A 300-amino-acid polypeptide reads, in one-letter code: GTPase Era (300 aa).

The Era-type G domain occupies 8–176; that stretch reads RCGYVAIVGR…EAQIAKHLPE (169 aa). The G1 stretch occupies residues 16-23; the sequence is GRPNVGKS. 16 to 23 provides a ligand contact to GTP; it reads GRPNVGKS. Residues 42–46 form a G2 region; the sequence is QTTRH. A G3 region spans residues 63 to 66; it reads DTPG. GTP-binding positions include 63 to 67 and 125 to 128; these read DTPGM and NKTD. The interval 125 to 128 is G4; sequence NKTD. A G5 region spans residues 155-157; it reads ISA. Residues 199–283 form the KH type-2 domain; sequence VREKIMRQLG…MLNLWVKVKG (85 aa).

Belongs to the TRAFAC class TrmE-Era-EngA-EngB-Septin-like GTPase superfamily. Era GTPase family. Monomer.

It localises to the cytoplasm. The protein resides in the cell inner membrane. Its function is as follows. An essential GTPase that binds both GDP and GTP, with rapid nucleotide exchange. Plays a role in 16S rRNA processing and 30S ribosomal subunit biogenesis and possibly also in cell cycle regulation and energy metabolism. The protein is GTPase Era of Pseudomonas putida (strain ATCC 700007 / DSM 6899 / JCM 31910 / BCRC 17059 / LMG 24140 / F1).